The sequence spans 164 residues: Peptidyl-prolyl cis-trans isomerase A-like 4F (164 aa).

The PPIase cyclophilin-type domain occupies 7–163 (FFEITRDGKP…KKITIADCGQ (157 aa)).

This sequence belongs to the cyclophilin-type PPIase family. PPIase A subfamily.

The protein resides in the cytoplasm. It catalyses the reaction [protein]-peptidylproline (omega=180) = [protein]-peptidylproline (omega=0). In terms of biological role, PPIases accelerate the folding of proteins. It catalyzes the cis-trans isomerization of proline imidic peptide bonds in oligopeptides. The chain is Peptidyl-prolyl cis-trans isomerase A-like 4F from Homo sapiens (Human).